Consider the following 320-residue polypeptide: ATP phosphoribosyltransferase (320 aa).

It belongs to the ATP phosphoribosyltransferase family. Long subfamily. Mg(2+) serves as cofactor.

It is found in the cytoplasm. It carries out the reaction 1-(5-phospho-beta-D-ribosyl)-ATP + diphosphate = 5-phospho-alpha-D-ribose 1-diphosphate + ATP. The protein operates within amino-acid biosynthesis; L-histidine biosynthesis; L-histidine from 5-phospho-alpha-D-ribose 1-diphosphate: step 1/9. Feedback inhibited by histidine. In terms of biological role, catalyzes the condensation of ATP and 5-phosphoribose 1-diphosphate to form N'-(5'-phosphoribosyl)-ATP (PR-ATP). Has a crucial role in the pathway because the rate of histidine biosynthesis seems to be controlled primarily by regulation of HisG enzymatic activity. In Caulobacter vibrioides (strain ATCC 19089 / CIP 103742 / CB 15) (Caulobacter crescentus), this protein is ATP phosphoribosyltransferase (hisG).